The following is a 338-amino-acid chain: Phenylalanine--tRNA ligase alpha subunit (338 aa).

E252 serves as a coordination point for Mg(2+).

The protein belongs to the class-II aminoacyl-tRNA synthetase family. Phe-tRNA synthetase alpha subunit type 1 subfamily. As to quaternary structure, tetramer of two alpha and two beta subunits. Mg(2+) is required as a cofactor.

It localises to the cytoplasm. It carries out the reaction tRNA(Phe) + L-phenylalanine + ATP = L-phenylalanyl-tRNA(Phe) + AMP + diphosphate + H(+). This Mycoplasmoides gallisepticum (strain R(low / passage 15 / clone 2)) (Mycoplasma gallisepticum) protein is Phenylalanine--tRNA ligase alpha subunit.